Reading from the N-terminus, the 421-residue chain is UDP-N-acetylglucosamine 1-carboxyvinyltransferase (421 aa).

A phosphoenolpyruvate-binding site is contributed by 22-23 (KN). Residue R94 coordinates UDP-N-acetyl-alpha-D-glucosamine. C118 serves as the catalytic Proton donor. The residue at position 118 (C118) is a 2-(S-cysteinyl)pyruvic acid O-phosphothioketal. Residues 163–166 (KVSV), D308, and I330 contribute to the UDP-N-acetyl-alpha-D-glucosamine site.

It belongs to the EPSP synthase family. MurA subfamily.

It localises to the cytoplasm. It catalyses the reaction phosphoenolpyruvate + UDP-N-acetyl-alpha-D-glucosamine = UDP-N-acetyl-3-O-(1-carboxyvinyl)-alpha-D-glucosamine + phosphate. Its pathway is cell wall biogenesis; peptidoglycan biosynthesis. Cell wall formation. Adds enolpyruvyl to UDP-N-acetylglucosamine. In Orientia tsutsugamushi (strain Ikeda) (Rickettsia tsutsugamushi), this protein is UDP-N-acetylglucosamine 1-carboxyvinyltransferase.